Here is an 89-residue protein sequence, read N- to C-terminus: Small ribosomal subunit protein uS15 (89 aa).

Belongs to the universal ribosomal protein uS15 family. As to quaternary structure, part of the 30S ribosomal subunit. Forms a bridge to the 50S subunit in the 70S ribosome, contacting the 23S rRNA.

Functionally, one of the primary rRNA binding proteins, it binds directly to 16S rRNA where it helps nucleate assembly of the platform of the 30S subunit by binding and bridging several RNA helices of the 16S rRNA. Forms an intersubunit bridge (bridge B4) with the 23S rRNA of the 50S subunit in the ribosome. The polypeptide is Small ribosomal subunit protein uS15 (Coxiella burnetii (strain CbuK_Q154) (Coxiella burnetii (strain Q154))).